The sequence spans 252 residues: Probable S-methyl-5'-thioinosine phosphorylase (252 aa).

Residues T8 and 44 to 45 (RH) contribute to the phosphate site. Position 173 (M173) interacts with substrate. T174 is a binding site for phosphate. 197-199 (NYA) contacts substrate.

It belongs to the PNP/MTAP phosphorylase family. MTAP subfamily. Homotrimer.

The enzyme catalyses S-methyl-5'-thioinosine + phosphate = 5-(methylsulfanyl)-alpha-D-ribose 1-phosphate + hypoxanthine. Its pathway is purine metabolism; purine nucleoside salvage. In terms of biological role, catalyzes the reversible phosphorylation of S-methyl-5'-thioinosine (MTI) to hypoxanthine and 5-methylthioribose-1-phosphate. Involved in the breakdown of S-methyl-5'-thioadenosine (MTA), a major by-product of polyamine biosynthesis. Catabolism of (MTA) occurs via deamination to MTI and phosphorolysis to hypoxanthine. This is Probable S-methyl-5'-thioinosine phosphorylase from Methanocaldococcus jannaschii (strain ATCC 43067 / DSM 2661 / JAL-1 / JCM 10045 / NBRC 100440) (Methanococcus jannaschii).